Here is a 185-residue protein sequence, read N- to C-terminus: Photosystem I assembly protein Ycf4 (185 aa).

Transmembrane regions (helical) follow at residues 24 to 44 (YIIG…SISS) and 66 to 86 (IIMG…WYLV).

The protein belongs to the Ycf4 family.

The protein localises to the cellular thylakoid membrane. Its function is as follows. Seems to be required for the assembly of the photosystem I complex. In Prochlorococcus marinus (strain AS9601), this protein is Photosystem I assembly protein Ycf4.